We begin with the raw amino-acid sequence, 180 residues long: Translation initiation factor IF-3 (180 aa).

This sequence belongs to the IF-3 family. In terms of assembly, monomer.

Its subcellular location is the cytoplasm. In terms of biological role, IF-3 binds to the 30S ribosomal subunit and shifts the equilibrium between 70S ribosomes and their 50S and 30S subunits in favor of the free subunits, thus enhancing the availability of 30S subunits on which protein synthesis initiation begins. The chain is Translation initiation factor IF-3 from Mesoplasma florum (strain ATCC 33453 / NBRC 100688 / NCTC 11704 / L1) (Acholeplasma florum).